Reading from the N-terminus, the 212-residue chain is MKKFEQLRGIVAPLDRANIDTDAIIPKQFLKSIKRSGFGQNLFDEWRYLDYGEPGKDAASRQLNPDFILNQSRYQGAKILVTRDNFGCGSSREHAPWALQDYGFAVIIAPSFADIFYNNCFKIGLLPIVLESPVVDRLIRDALTVDGYQLEINLEAQTVMALSGETYWFEVDHFRKHCLLNGLDEIGLTLQHADRIRKFEINRRNEQPWLFL.

The protein belongs to the LeuD family. LeuD type 1 subfamily. Heterodimer of LeuC and LeuD.

It catalyses the reaction (2R,3S)-3-isopropylmalate = (2S)-2-isopropylmalate. It functions in the pathway amino-acid biosynthesis; L-leucine biosynthesis; L-leucine from 3-methyl-2-oxobutanoate: step 2/4. Its function is as follows. Catalyzes the isomerization between 2-isopropylmalate and 3-isopropylmalate, via the formation of 2-isopropylmaleate. The polypeptide is 3-isopropylmalate dehydratase small subunit (Nitrosomonas eutropha (strain DSM 101675 / C91 / Nm57)).